Here is a 400-residue protein sequence, read N- to C-terminus: Telomeric repeat-binding factor 2-interacting protein 1 (400 aa).

Residue A2 is modified to N-acetylalanine. 2 positions are modified to phosphoserine: S36 and S43. Positions 78–101 (FISTQYILDCVERNERLELEAYRL) constitute a BRCT domain. The interval 105–126 (SAADTGSEAKPGALAEGAAEPE) is disordered. Residues 112–125 (EAKPGALAEGAAEP) show a composition bias toward low complexity. Residue K114 forms a Glycyl lysine isopeptide (Lys-Gly) (interchain with G-Cter in SUMO2) linkage. The Myb-like domain occupies 128 to 188 (QRLAGRIAFT…SLKDRYLKHL (61 aa)). Phosphoserine is present on residues S154 and S156. A Glycyl lysine isopeptide (Lys-Gly) (interchain with G-Cter in SUMO2) cross-link involves residue K194. 2 disordered regions span residues 196–244 (LLGD…EEIQ) and 264–311 (VVVD…SQPE). Residues S203 and S206 each carry the phosphoserine modification. Residues K208, K212, and K240 each participate in a glycyl lysine isopeptide (Lys-Gly) (interchain with G-Cter in SUMO2) cross-link. The span at 280–305 (CDDDPPTPEEDSETQPDEEEEEEEEE) shows a compositional bias: acidic residues. K373 is covalently cross-linked (Glycyl lysine isopeptide (Lys-Gly) (interchain with G-Cter in SUMO2)). The short motif at 384–400 (KKFGAQNVARRIEFRKK) is the Nuclear localization signal element.

The protein belongs to the RAP1 family. In terms of assembly, associates with the I-kappa-B-kinase (IKK) core complex, composed of CHUK, IKBKB and IKBKG. Homodimer. Component of the shelterin complex (telosome) composed of TERF1, TERF2, TINF2, TERF2IP ACD and POT1. Interacts with TERF2 (but not TERF1) with its C-terminus. Interacts with SLX4/BTBD12. Interacts with TERF2; the interaction is direct.

The protein resides in the nucleus. It is found in the cytoplasm. The protein localises to the chromosome. Its subcellular location is the telomere. Its function is as follows. Acts both as a regulator of telomere function and as a transcription regulator. Involved in the regulation of telomere length and protection as a component of the shelterin complex (telosome). In contrast to other components of the shelterin complex, it is dispensible for telomere capping and does not participate in the protection of telomeres against non-homologous end-joining (NHEJ)-mediated repair. Instead, it is required to negatively regulate telomere recombination and is essential for repressing homology-directed repair (HDR), which can affect telomere length. Does not bind DNA directly: recruited to telomeric double-stranded 5'-TTAGGG-3' repeats via its interaction with TERF2. Independently of its function in telomeres, also acts as a transcription regulator: recruited to extratelomeric 5'-TTAGGG-3' sites via its association with TERF2 or other factors, and regulates gene expression. When cytoplasmic, associates with the I-kappa-B-kinase (IKK) complex and acts as a regulator of the NF-kappa-B signaling by promoting IKK-mediated phosphorylation of RELA/p65, leading to activate expression of NF-kappa-B target genes. This chain is Telomeric repeat-binding factor 2-interacting protein 1 (TERF2IP), found in Macaca fascicularis (Crab-eating macaque).